We begin with the raw amino-acid sequence, 240 residues long: Ribosome maturation protein SDO1 homolog (240 aa).

It belongs to the SDO1/SBDS family.

In Methanocaldococcus jannaschii (strain ATCC 43067 / DSM 2661 / JAL-1 / JCM 10045 / NBRC 100440) (Methanococcus jannaschii), this protein is Ribosome maturation protein SDO1 homolog.